We begin with the raw amino-acid sequence, 710 residues long: Gastrulation-defective protein 3 (710 aa).

A helical membrane pass occupies residues 597–615 (AYYVFTVLALIISNFPTIV).

The protein resides in the membrane. The polypeptide is Gastrulation-defective protein 3 (gadr-3) (Caenorhabditis elegans).